Here is a 255-residue protein sequence, read N- to C-terminus: MIQVTLIQIDNYGPWTVTPGPRAEPDLQTLQSRLYGDLEREFGAHGAIVFFNRFDNLIAISNGMDYDDHLLIQQSIRNRYPITISMGVGTADTAYEAQKIATKMIQNGGGAQSANRCEVLNIDSLADDDNSLVQIAHIDINDITNTLTDIETAFDTSIKVYEVLLALMDELAKIGGMCFFIGGDNYMAPTNGISKDQLREALKVVDKKTGVTLKAGIGVAKQAGRAADLADIGLEDIRAELVDDSVLLFNDLDEY.

Belongs to the archaeal-type GTP cyclohydrolase family.

The catalysed reaction is GTP + 3 H2O = 2-amino-5-formylamino-6-(5-phospho-D-ribosylamino)pyrimidin-4(3H)-one + 2 phosphate + 2 H(+). Its function is as follows. Catalyzes the formation of 2-amino-5-formylamino-6-ribofuranosylamino-4(3H)-pyrimidinone ribonucleotide monophosphate and inorganic phosphate from GTP. Also has an independent pyrophosphate phosphohydrolase activity. The polypeptide is GTP cyclohydrolase III (Methanosphaera stadtmanae (strain ATCC 43021 / DSM 3091 / JCM 11832 / MCB-3)).